The sequence spans 232 residues: 7-cyano-7-deazaguanine synthase (232 aa).

Position 8–18 (8–18 (FSGGQDSTTCL)) interacts with ATP. Positions 187, 196, 199, and 202 each coordinate Zn(2+).

Belongs to the QueC family. Zn(2+) serves as cofactor.

It catalyses the reaction 7-carboxy-7-deazaguanine + NH4(+) + ATP = 7-cyano-7-deazaguanine + ADP + phosphate + H2O + H(+). It participates in purine metabolism; 7-cyano-7-deazaguanine biosynthesis. In terms of biological role, catalyzes the ATP-dependent conversion of 7-carboxy-7-deazaguanine (CDG) to 7-cyano-7-deazaguanine (preQ(0)). This chain is 7-cyano-7-deazaguanine synthase, found in Vibrio parahaemolyticus serotype O3:K6 (strain RIMD 2210633).